Consider the following 103-residue polypeptide: Pro-glucagon (103 aa).

The protein belongs to the glucagon family.

The protein resides in the secreted. Functionally, plays a key role in glucose metabolism and homeostasis. Regulates blood glucose by increasing gluconeogenesis and decreasing glycolysis. The polypeptide is Pro-glucagon (gcg) (Aquarana catesbeiana (American bullfrog)).